The sequence spans 252 residues: Type III pantothenate kinase (252 aa).

An ATP-binding site is contributed by Asp6–Ala13. A substrate-binding site is contributed by Gly104–Arg107. The active-site Proton acceptor is the Asp106. Asp128 provides a ligand contact to K(+). An ATP-binding site is contributed by Thr131. Residue Thr183 participates in substrate binding.

Belongs to the type III pantothenate kinase family. As to quaternary structure, homodimer. Requires NH4(+) as cofactor. K(+) serves as cofactor.

The protein resides in the cytoplasm. It catalyses the reaction (R)-pantothenate + ATP = (R)-4'-phosphopantothenate + ADP + H(+). The protein operates within cofactor biosynthesis; coenzyme A biosynthesis; CoA from (R)-pantothenate: step 1/5. In terms of biological role, catalyzes the phosphorylation of pantothenate (Pan), the first step in CoA biosynthesis. This Thermus thermophilus (strain ATCC 27634 / DSM 579 / HB8) protein is Type III pantothenate kinase.